The primary structure comprises 293 residues: GTP cyclohydrolase FolE2 (293 aa).

Belongs to the GTP cyclohydrolase IV family.

It catalyses the reaction GTP + H2O = 7,8-dihydroneopterin 3'-triphosphate + formate + H(+). The protein operates within cofactor biosynthesis; 7,8-dihydroneopterin triphosphate biosynthesis; 7,8-dihydroneopterin triphosphate from GTP: step 1/1. Converts GTP to 7,8-dihydroneopterin triphosphate. This Pseudomonas entomophila (strain L48) protein is GTP cyclohydrolase FolE2.